The chain runs to 83 residues: Cytochrome b559 subunit alpha (83 aa).

A helical transmembrane segment spans residues 22-36 (VIHAVTLPAIFLAGF). Residue His-24 coordinates heme.

It belongs to the PsbE/PsbF family. As to quaternary structure, heterodimer of an alpha subunit and a beta subunit. PSII is composed of 1 copy each of membrane proteins PsbA, PsbB, PsbC, PsbD, PsbE, PsbF, PsbH, PsbI, PsbJ, PsbK, PsbL, PsbM, PsbT, PsbX, PsbY, PsbZ, Psb30/Ycf12, peripheral proteins PsbO, CyanoQ (PsbQ), PsbU, PsbV and a large number of cofactors. It forms dimeric complexes. Requires heme b as cofactor.

It is found in the cellular thylakoid membrane. Its function is as follows. This b-type cytochrome is tightly associated with the reaction center of photosystem II (PSII). PSII is a light-driven water:plastoquinone oxidoreductase that uses light energy to abstract electrons from H(2)O, generating O(2) and a proton gradient subsequently used for ATP formation. It consists of a core antenna complex that captures photons, and an electron transfer chain that converts photonic excitation into a charge separation. The chain is Cytochrome b559 subunit alpha from Synechococcus sp. (strain RCC307).